Consider the following 282-residue polypeptide: 3-hydroxyanthranilate 3,4-dioxygenase (282 aa).

A domain A (catalytic) region spans residues 1 to 160; that stretch reads MAMAINVKKW…SKQYKSGKPD (160 aa). Arg-43 is a binding site for O2. Fe cation is bound by residues His-47, Glu-53, and His-91. A substrate-binding site is contributed by Glu-53. Substrate-binding residues include Arg-95 and Glu-105. Residues 161–177 form a linker region; it reads PDQPKAKMPFCLSTEQV. Residues 178 to 282 are domain B; the sequence is MEPFSFQHWL…LSTSQVPLPM (105 aa).

This sequence belongs to the 3-HAO family. As to quaternary structure, monomer. It depends on Fe(2+) as a cofactor.

The protein localises to the cytoplasm. The protein resides in the cytosol. It carries out the reaction 3-hydroxyanthranilate + O2 = (2Z,4Z)-2-amino-3-carboxymuconate 6-semialdehyde. It functions in the pathway cofactor biosynthesis; NAD(+) biosynthesis; quinolinate from L-kynurenine: step 3/3. Functionally, catalyzes the oxidative ring opening of 3-hydroxyanthranilate to 2-amino-3-carboxymuconate semialdehyde, which spontaneously cyclizes to quinolinate. In Xenopus laevis (African clawed frog), this protein is 3-hydroxyanthranilate 3,4-dioxygenase (haao).